The sequence spans 476 residues: Glutamyl-tRNA(Gln) amidotransferase subunit A (476 aa).

Catalysis depends on charge relay system residues Lys-76 and Ser-151. Ser-175 acts as the Acyl-ester intermediate in catalysis.

It belongs to the amidase family. GatA subfamily. Heterotrimer of A, B and C subunits.

The enzyme catalyses L-glutamyl-tRNA(Gln) + L-glutamine + ATP + H2O = L-glutaminyl-tRNA(Gln) + L-glutamate + ADP + phosphate + H(+). In terms of biological role, allows the formation of correctly charged Gln-tRNA(Gln) through the transamidation of misacylated Glu-tRNA(Gln) in organisms which lack glutaminyl-tRNA synthetase. The reaction takes place in the presence of glutamine and ATP through an activated gamma-phospho-Glu-tRNA(Gln). This is Glutamyl-tRNA(Gln) amidotransferase subunit A from Chlorobium phaeobacteroides (strain DSM 266 / SMG 266 / 2430).